We begin with the raw amino-acid sequence, 279 residues long: tRNA pseudouridine synthase A (279 aa).

Asp54 (nucleophile) is an active-site residue. Tyr112 contacts substrate.

It belongs to the tRNA pseudouridine synthase TruA family. Homodimer.

It carries out the reaction uridine(38/39/40) in tRNA = pseudouridine(38/39/40) in tRNA. Formation of pseudouridine at positions 38, 39 and 40 in the anticodon stem and loop of transfer RNAs. In Cutibacterium acnes (strain DSM 16379 / KPA171202) (Propionibacterium acnes), this protein is tRNA pseudouridine synthase A.